The chain runs to 339 residues: NADH-quinone oxidoreductase subunit H (339 aa).

The next 8 helical transmembrane spans lie at 7–27, 77–97, 112–132, 149–169, 180–200, 235–255, 276–296, and 315–335; these read LFWITLKIMALVVPLMLAVAY, VLFVIAPLLAIMPALAAWAVI, LLYILAMTSLGVYGIIIAGWA, VVSYEIAMGFALVGVLMAAGS, AGGIFHWFWLPLLPLFLVYWI, VFFLAEYANMILISAVAAVMF, VPGVVWFMLKTAFFMFCYLWF, and VLIPVTVVWLIVLTIFIVTGF.

This sequence belongs to the complex I subunit 1 family. NDH-1 is composed of 14 different subunits. Subunits NuoA, H, J, K, L, M, N constitute the membrane sector of the complex.

It is found in the cell inner membrane. It catalyses the reaction a quinone + NADH + 5 H(+)(in) = a quinol + NAD(+) + 4 H(+)(out). Functionally, NDH-1 shuttles electrons from NADH, via FMN and iron-sulfur (Fe-S) centers, to quinones in the respiratory chain. The immediate electron acceptor for the enzyme in this species is believed to be ubiquinone. Couples the redox reaction to proton translocation (for every two electrons transferred, four hydrogen ions are translocated across the cytoplasmic membrane), and thus conserves the redox energy in a proton gradient. This subunit may bind ubiquinone. The sequence is that of NADH-quinone oxidoreductase subunit H from Alkalilimnicola ehrlichii (strain ATCC BAA-1101 / DSM 17681 / MLHE-1).